Reading from the N-terminus, the 147-residue chain is Small ribosomal subunit protein eS19 (147 aa).

The protein belongs to the eukaryotic ribosomal protein eS19 family. Part of the 30S ribosomal subunit.

In terms of biological role, may be involved in maturation of the 30S ribosomal subunit. The protein is Small ribosomal subunit protein eS19 of Archaeoglobus fulgidus (strain ATCC 49558 / DSM 4304 / JCM 9628 / NBRC 100126 / VC-16).